The chain runs to 309 residues: MGNAYIFSLQPTFTQGLILGQFSILFLLVLVLKYLFFDTVSDHAYRTSSYQPKIERDEDEDGIALVAERLAPKPAQDGKQSGNECESADWLNALLIQVLEAYRVKLRDGLPGAEGDEVARKRVERFANQMRPPGFLDPIKVHSVDLGVTAPRLSRARPRPQKAPNTDPAIEFDMSYADTISLSLSTSVLFNYPFASFARLPVSLTISLSHFSSSVLLTPPQPHAQHPTVTLNLPSPGTDFVLNIQTKSLMGSRAKLADVPKLHEMITHQIQRVLLEKGTWKVVLPGLASVSEVKEDVKREQQAGELPVN.

Residues 1-16 (MGNAYIFSLQPTFTQG) lie on the Lumenal side of the membrane. The helical transmembrane segment at 17–37 (LILGQFSILFLLVLVLKYLFF) threads the bilayer. Topologically, residues 38-309 (DTVSDHAYRT…EQQAGELPVN (272 aa)) are cytoplasmic. The SMP-LTD domain maps to 84–293 (ECESADWLNA…LPGLASVSEV (210 aa)).

It belongs to the MMM1 family. Homodimer. Component of the ER-mitochondria encounter structure (ERMES) or MDM complex, composed of MMM1, MDM10, MDM12 and MDM34. An MMM1 homodimer associates with one molecule of MDM12 on each side in a pairwise head-to-tail manner, and the SMP-LTD domains of MMM1 and MDM12 generate a continuous hydrophobic tunnel for phospholipid trafficking.

It localises to the endoplasmic reticulum membrane. Component of the ERMES/MDM complex, which serves as a molecular tether to connect the endoplasmic reticulum (ER) and mitochondria. Components of this complex are involved in the control of mitochondrial shape and protein biogenesis, and function in nonvesicular lipid trafficking between the ER and mitochondria. The MDM12-MMM1 subcomplex functions in the major beta-barrel assembly pathway that is responsible for biogenesis of all outer membrane beta-barrel proteins, and acts in a late step after the SAM complex. The MDM10-MDM12-MMM1 subcomplex further acts in the TOM40-specific pathway after the action of the MDM12-MMM1 complex. Essential for establishing and maintaining the structure of mitochondria and maintenance of mtDNA nucleoids. The chain is Maintenance of mitochondrial morphology protein 1 from Postia placenta (strain ATCC 44394 / Madison 698-R) (Brown rot fungus).